Here is a 263-residue protein sequence, read N- to C-terminus: 4-hydroxy-tetrahydrodipicolinate reductase (263 aa).

NAD(+) contacts are provided by residues 7 to 12 (GFKGRM), 96 to 98 (GTT), and 122 to 125 (APNF). His152 (proton donor/acceptor) is an active-site residue. Residue His153 coordinates (S)-2,3,4,5-tetrahydrodipicolinate. Lys156 functions as the Proton donor in the catalytic mechanism. 162 to 163 (GT) is a binding site for (S)-2,3,4,5-tetrahydrodipicolinate.

Belongs to the DapB family.

Its subcellular location is the cytoplasm. It carries out the reaction (S)-2,3,4,5-tetrahydrodipicolinate + NAD(+) + H2O = (2S,4S)-4-hydroxy-2,3,4,5-tetrahydrodipicolinate + NADH + H(+). The catalysed reaction is (S)-2,3,4,5-tetrahydrodipicolinate + NADP(+) + H2O = (2S,4S)-4-hydroxy-2,3,4,5-tetrahydrodipicolinate + NADPH + H(+). Its pathway is amino-acid biosynthesis; L-lysine biosynthesis via DAP pathway; (S)-tetrahydrodipicolinate from L-aspartate: step 4/4. Its function is as follows. Catalyzes the conversion of 4-hydroxy-tetrahydrodipicolinate (HTPA) to tetrahydrodipicolinate. The sequence is that of 4-hydroxy-tetrahydrodipicolinate reductase from Listeria monocytogenes serotype 4b (strain CLIP80459).